Reading from the N-terminus, the 65-residue chain is Small ribosomal subunit protein bS21 (65 aa).

The protein belongs to the bacterial ribosomal protein bS21 family.

The chain is Small ribosomal subunit protein bS21 from Cytophaga hutchinsonii (strain ATCC 33406 / DSM 1761 / CIP 103989 / NBRC 15051 / NCIMB 9469 / D465).